Consider the following 504-residue polypeptide: Glycerol kinase (504 aa).

Thr14 is an ADP binding site. ATP-binding residues include Thr14, Thr15, and Ser16. Residue Thr14 participates in sn-glycerol 3-phosphate binding. Arg18 contributes to the ADP binding site. Sn-glycerol 3-phosphate is bound by residues Arg84, Glu85, Tyr136, and Asp246. Residues Arg84, Glu85, Tyr136, Asp246, and Gln247 each contribute to the glycerol site. Positions 268 and 311 each coordinate ADP. Thr268, Gly311, Gln315, and Gly412 together coordinate ATP. The ADP site is built by Gly412 and Asn416.

Belongs to the FGGY kinase family.

It carries out the reaction glycerol + ATP = sn-glycerol 3-phosphate + ADP + H(+). It functions in the pathway polyol metabolism; glycerol degradation via glycerol kinase pathway; sn-glycerol 3-phosphate from glycerol: step 1/1. Inhibited by fructose 1,6-bisphosphate (FBP). Its function is as follows. Key enzyme in the regulation of glycerol uptake and metabolism. Catalyzes the phosphorylation of glycerol to yield sn-glycerol 3-phosphate. This Aliivibrio salmonicida (strain LFI1238) (Vibrio salmonicida (strain LFI1238)) protein is Glycerol kinase.